The chain runs to 379 residues: Nitric oxide reductase FlRd-NAD(+) reductase (379 aa).

Belongs to the FAD-dependent oxidoreductase family. FAD is required as a cofactor.

It localises to the cytoplasm. The catalysed reaction is 2 reduced [nitric oxide reductase rubredoxin domain] + NAD(+) + H(+) = 2 oxidized [nitric oxide reductase rubredoxin domain] + NADH. It participates in nitrogen metabolism; nitric oxide reduction. One of at least two accessory proteins for anaerobic nitric oxide (NO) reductase. Reduces the rubredoxin moiety of NO reductase. The chain is Nitric oxide reductase FlRd-NAD(+) reductase from Pectobacterium atrosepticum (strain SCRI 1043 / ATCC BAA-672) (Erwinia carotovora subsp. atroseptica).